We begin with the raw amino-acid sequence, 154 residues long: Myoglobin (154 aa).

In terms of domain architecture, Globin spans 2–148; the sequence is GLSDGEWHLV…FRNDIAAKYK (147 aa). Serine 4 is modified (phosphoserine). Residue histidine 65 coordinates nitrite. Histidine 65 contacts O2. Threonine 68 carries the phosphothreonine modification. Histidine 94 contributes to the heme b binding site.

The protein belongs to the globin family. In terms of assembly, monomeric.

The protein resides in the cytoplasm. It is found in the sarcoplasm. The enzyme catalyses Fe(III)-heme b-[protein] + nitric oxide + H2O = Fe(II)-heme b-[protein] + nitrite + 2 H(+). It catalyses the reaction H2O2 + AH2 = A + 2 H2O. Monomeric heme protein which primary function is to store oxygen and facilitate its diffusion within muscle tissues. Reversibly binds oxygen through a pentacoordinated heme iron and enables its timely and efficient release as needed during periods of heightened demand. Depending on the oxidative conditions of tissues and cells, and in addition to its ability to bind oxygen, it also has a nitrite reductase activity whereby it regulates the production of bioactive nitric oxide. Under stress conditions, like hypoxia and anoxia, it also protects cells against reactive oxygen species thanks to its pseudoperoxidase activity. The polypeptide is Myoglobin (MB) (Halichoerus grypus (Gray seal)).